A 480-amino-acid chain; its full sequence is Adenosylhomocysteinase (480 aa).

The substrate site is built by Thr-63, Asp-142, and Glu-203. NAD(+) is bound at residue 204–206; the sequence is TTT. Residues Lys-233 and Asp-237 each contribute to the substrate site. Residues Asn-238, 267–272, Glu-290, Asn-325, 346–348, and Asn-394 contribute to the NAD(+) site; these read GYGDVG and IGH.

It belongs to the adenosylhomocysteinase family. Requires NAD(+) as cofactor.

The protein resides in the cytoplasm. It catalyses the reaction S-adenosyl-L-homocysteine + H2O = L-homocysteine + adenosine. It functions in the pathway amino-acid biosynthesis; L-homocysteine biosynthesis; L-homocysteine from S-adenosyl-L-homocysteine: step 1/1. Its function is as follows. May play a key role in the regulation of the intracellular concentration of adenosylhomocysteine. The chain is Adenosylhomocysteinase from Xylella fastidiosa (strain 9a5c).